The sequence spans 72 residues: MNNSMINPSIVDLLKKVENRYTLVTMTAKRARQLIEGSEALVDIDSTKPVTIAIKEISDRAITYETVKEGIK.

It belongs to the RNA polymerase subunit omega family. In terms of assembly, the RNAP catalytic core consists of 2 alpha, 1 beta, 1 beta' and 1 omega subunit. When a sigma factor is associated with the core the holoenzyme is formed, which can initiate transcription.

The enzyme catalyses RNA(n) + a ribonucleoside 5'-triphosphate = RNA(n+1) + diphosphate. In terms of biological role, promotes RNA polymerase assembly. Latches the N- and C-terminal regions of the beta' subunit thereby facilitating its interaction with the beta and alpha subunits. The protein is DNA-directed RNA polymerase subunit omega of Clostridium kluyveri (strain NBRC 12016).